We begin with the raw amino-acid sequence, 91 residues long: Acylphosphatase (91 aa).

The Acylphosphatase-like domain occupies C5 to L91. Residues R20 and N38 contribute to the active site.

Belongs to the acylphosphatase family.

It carries out the reaction an acyl phosphate + H2O = a carboxylate + phosphate + H(+). The chain is Acylphosphatase (acyP) from Vibrio cholerae serotype O1 (strain ATCC 39315 / El Tor Inaba N16961).